A 508-amino-acid chain; its full sequence is Photosystem II CP47 reaction center protein (508 aa).

Helical transmembrane passes span 21–36 (AVHI…WAGS), 101–115 (IILS…IWHW), 140–156 (GIHL…FGAF), 203–218 (IAAG…FHLS), 237–252 (VLSS…AFVV), and 457–472 (NFAL…HGGR).

The protein belongs to the PsbB/PsbC family. PsbB subfamily. As to quaternary structure, PSII is composed of 1 copy each of membrane proteins PsbA, PsbB, PsbC, PsbD, PsbE, PsbF, PsbH, PsbI, PsbJ, PsbK, PsbL, PsbM, PsbT, PsbX, PsbY, PsbZ, Psb30/Ycf12, at least 3 peripheral proteins of the oxygen-evolving complex and a large number of cofactors. It forms dimeric complexes. It depends on Binds multiple chlorophylls. PSII binds additional chlorophylls, carotenoids and specific lipids. as a cofactor.

Its subcellular location is the plastid. It localises to the chloroplast thylakoid membrane. Functionally, one of the components of the core complex of photosystem II (PSII). It binds chlorophyll and helps catalyze the primary light-induced photochemical processes of PSII. PSII is a light-driven water:plastoquinone oxidoreductase, using light energy to abstract electrons from H(2)O, generating O(2) and a proton gradient subsequently used for ATP formation. In Chaetosphaeridium globosum (Charophycean green alga), this protein is Photosystem II CP47 reaction center protein.